The primary structure comprises 114 residues: Transmembrane protein 14DP (114 aa).

A run of 4 helical transmembrane segments spans residues Leu-8–Val-28, Ala-36–Leu-56, Val-63–Met-80, and Tyr-83–Ala-103.

This sequence belongs to the TMEM14 family.

The protein localises to the membrane. The polypeptide is Transmembrane protein 14DP (TMEM14DP) (Homo sapiens (Human)).